Consider the following 276-residue polypeptide: MRKTDAHILVFDSGIGGLGVADCIRRMLPAATLGYVADTAGFPYGAMSDEALVTRVLTVLEQAIARLRPDMVVIACNTASTLALSALRSRHDLPFIGCVPPLKWAASVSATRQIGLLATPATVDRPYLTALMQEHGQGCTLHAHGARHLAGYAEAVFRGETVLVEAVRAELGILGMIPDIDAVALGCTHYGRLLPWLRQAMPRPVAWLDPAEAVARQAARIAITAAATAAPDSLPRAAPCWAQTVFTTGAVPDEATRQAWAAEGFPEWQPLEIASA.

Substrate is bound by residues Asp-12 to Ser-13 and Tyr-44 to Gly-45. Residue Cys-76 is the Proton donor/acceptor of the active site. Asn-77–Thr-78 contacts substrate. The Proton donor/acceptor role is filled by Cys-187. Thr-188–His-189 provides a ligand contact to substrate.

Belongs to the aspartate/glutamate racemases family.

The enzyme catalyses L-glutamate = D-glutamate. It functions in the pathway cell wall biogenesis; peptidoglycan biosynthesis. Provides the (R)-glutamate required for cell wall biosynthesis. This Granulibacter bethesdensis (strain ATCC BAA-1260 / CGDNIH1) protein is Glutamate racemase.